The following is a 54-amino-acid chain: Zinc-containing ferredoxin A (54 aa).

The disordered stretch occupies residues 1–21 (GIDPNYRTSRPEVGTHEGHKV). The segment at 1-36 (GIDPNYRTSRPEVGTHEGHKVYGPVENPKVLGIHGA) is N-terminal extension. The span at 9–20 (SRPEVGTHEGHK) shows a compositional bias: basic and acidic residues. Zn(2+) is bound by residues His16 and His19. Residue Lys29 is modified to N6-methyllysine. Zn(2+) is bound at residue His34. The region spanning 35–54 (GAIVGVDFDLCIADGSCINA) is the 4Fe-4S ferredoxin-type 1 domain. Cys45 and Cys51 together coordinate [3Fe-4S] cluster.

[3Fe-4S] cluster serves as cofactor. Requires [4Fe-4S] cluster as cofactor. Zn(2+) is required as a cofactor.

Ferredoxins are iron-sulfur proteins that transfer electrons in a wide variety of metabolic reactions. In Sulfuracidifex metallicus (Sulfolobus metallicus), this protein is Zinc-containing ferredoxin A (zfx).